The chain runs to 186 residues: UPF0340 protein M6_Spy1622 (186 aa).

Belongs to the UPF0340 family.

This Streptococcus pyogenes serotype M6 (strain ATCC BAA-946 / MGAS10394) protein is UPF0340 protein M6_Spy1622.